The primary structure comprises 653 residues: Biotin biosynthesis bifunctional protein BioWF (653 aa).

Arginine 278 is a substrate binding site. 365–366 (GY) is a binding site for pyridoxal 5'-phosphate. Histidine 390 is a binding site for substrate. Pyridoxal 5'-phosphate is bound by residues serine 436, 461 to 464 (DDAH), and 492 to 495 (TASK). N6-(pyridoxal phosphate)lysine is present on lysine 495.

This sequence in the N-terminal section; belongs to the BioW family. In the C-terminal section; belongs to the class-II pyridoxal-phosphate-dependent aminotransferase family. BioF subfamily. In terms of assembly, homodimer. It depends on Mg(2+) as a cofactor. The cofactor is pyridoxal 5'-phosphate.

The enzyme catalyses heptanedioate + ATP + CoA = 6-carboxyhexanoyl-CoA + AMP + diphosphate. The catalysed reaction is 6-carboxyhexanoyl-[ACP] + L-alanine + H(+) = (8S)-8-amino-7-oxononanoate + holo-[ACP] + CO2. Its pathway is metabolic intermediate metabolism; pimeloyl-CoA biosynthesis; pimeloyl-CoA from pimelate: step 1/1. It functions in the pathway cofactor biosynthesis; biotin biosynthesis. Functionally, catalyzes both the decarboxylative condensation of pimeloyl-[acyl-carrier protein] and L-alanine to produce 8-amino-7-oxononanoate (AON), [acyl-carrier protein], and carbon dioxide, and the transformation of pimelate into pimeloyl-CoA with concomitant hydrolysis of ATP to AMP. This chain is Biotin biosynthesis bifunctional protein BioWF, found in Cutibacterium acnes (strain DSM 16379 / KPA171202) (Propionibacterium acnes).